We begin with the raw amino-acid sequence, 494 residues long: Catalase (494 aa).

Active-site residues include His65 and Asn138. Tyr348 lines the heme pocket.

It belongs to the catalase family. Homotetramer. It depends on heme as a cofactor.

It is found in the cytoplasm. Its subcellular location is the cytosol. The protein localises to the peroxisome matrix. The catalysed reaction is 2 H2O2 = O2 + 2 H2O. Its function is as follows. Catalyzes the degradation of hydrogen peroxide (H(2)O(2)) generated by peroxisomal oxidases to water and oxygen, thereby protecting cells from the toxic effects of hydrogen peroxide. This Pisum sativum (Garden pea) protein is Catalase.